Reading from the N-terminus, the 156-residue chain is 17 kDa lipoprotein (156 aa).

The first 21 residues, 1–21, serve as a signal peptide directing secretion; that stretch reads MKGSVRALCAFLGVGALGSAL. A lipid anchor (N-palmitoyl cysteine) is attached at cysteine 22. Cysteine 22 is lipidated: S-diacylglycerol cysteine.

The protein resides in the cell membrane. The chain is 17 kDa lipoprotein (tpp17) from Treponema pallidum (strain Nichols).